A 554-amino-acid polypeptide reads, in one-letter code: Terpene synthase 17 (554 aa).

Residues Asp306, Asp310, and Glu458 each contribute to the Mg(2+) site. A DDXXD motif motif is present at residues 306 to 310 (DDTYD).

This sequence belongs to the terpene synthase family. Tpsa subfamily. Mg(2+) serves as cofactor. Mn(2+) is required as a cofactor. Mostly expressed in stem and trichomes, to a lower extent in leaves, flowers and roots and, at low levels, in fruits.

The enzyme catalyses (2Z,6Z)-farnesyl diphosphate = beta-bisabolene + diphosphate. It carries out the reaction (2E,6E)-farnesyl diphosphate = (+)-valencene + diphosphate. It catalyses the reaction (2E,6E)-farnesyl diphosphate = (E)-beta-farnesene + diphosphate. The catalysed reaction is (2E,6E)-farnesyl diphosphate = gamma-gurjunene + diphosphate. The enzyme catalyses (2Z,6Z)-farnesyl diphosphate = (E)-gamma-bisabolene + diphosphate. It carries out the reaction (2E)-geranyl diphosphate = limonene + diphosphate. It catalyses the reaction (2E)-geranyl diphosphate = beta-myrcene + diphosphate. The catalysed reaction is (2E)-geranyl diphosphate = (E)-beta-ocimene + diphosphate. The enzyme catalyses (2E)-geranyl diphosphate = terpinolene + diphosphate. It carries out the reaction (2E)-geranyl diphosphate = gamma-terpinene + diphosphate. It catalyses the reaction (2Z,6Z)-farnesyl diphosphate = (Z)-gamma-bisabolene + diphosphate. The catalysed reaction is (2E,6E)-farnesyl diphosphate = (1S,5S,6R)-alpha-bergamotene + diphosphate. The enzyme catalyses (2Z,6Z)-farnesyl diphosphate = (1S,5S,6S)-alpha-bergamotene + diphosphate. It functions in the pathway secondary metabolite biosynthesis; terpenoid biosynthesis. In terms of biological role, sesquiterpene synthase involved in the biosynthesis of volatile compounds. Mediates the conversion of (2E,6E)-farnesyl diphosphate (FPP) into gamma-gurjunene, (E)-beta-farnesene and (+)-valencene, and of (2Z,6Z)-farnesyl diphosphate ((ZZ)-FPP) into (E)-alpha-bergamotene and (Z)-gamma-bisabolene as well as beta-bisabolene, (Z)-alpha-bergamotene and (E)-gamma-bisabolene to a lower extent. Can act with a low efficiency as a monoterpene synthase with geranyl diphosphate (GPP) as substrate, thus producing beta-myrcene, (E)-beta-ocimene, limonene, terpinolene, gamma-terpinene and (Z)-beta-ocimene. The sequence is that of Terpene synthase 17 from Solanum lycopersicum (Tomato).